We begin with the raw amino-acid sequence, 379 residues long: MKLKFELKKKNGNARRGQLIFERGTVQTPAFMPVGTYGTVKGMTPEEVKETGAQILLGNTFHLWLRPGQEVMKMHGDLHDFMNWQGPILTDSGGFQVFSLGDIRKITEEGVHFRNPVNGDKIFMDAEKSMEIQKDLGSDIVMIFDECTPYPATHDEAKKSMEMSLRWAKRSRDHFDKLENPNNLFGIVQGGVYEDLRDVSVKGLTEIGFDGYAVGGLAVGEPKEDMHRVLEHTCPQLPEDKPRYLMGVGKPEDLVEGVRRGIDMFDCVMPTRNARNGHLFVTGGVIKIRNAAHKTDTTPLDPHCDCYTCKNYSKSYLHHLDRCNEILGARLNTIHNLRYYQRLMESIRKAIDEDRFDQFVAEFYARRNREVPPLQKDKA.

The active-site Proton acceptor is Asp-91. Substrate is bound by residues 91 to 95 (DSGGF), Asp-145, Gln-189, and Gly-216. The RNA binding stretch occupies residues 247–253 (GVGKPED). The Nucleophile role is filled by Asp-266. The interval 271–275 (TRNAR) is RNA binding; important for wobble base 34 recognition. Residues Cys-304, Cys-306, Cys-309, and His-335 each coordinate Zn(2+).

Belongs to the queuine tRNA-ribosyltransferase family. Homodimer. Within each dimer, one monomer is responsible for RNA recognition and catalysis, while the other monomer binds to the replacement base PreQ1. Zn(2+) is required as a cofactor.

The catalysed reaction is 7-aminomethyl-7-carbaguanine + guanosine(34) in tRNA = 7-aminomethyl-7-carbaguanosine(34) in tRNA + guanine. The protein operates within tRNA modification; tRNA-queuosine biosynthesis. Catalyzes the base-exchange of a guanine (G) residue with the queuine precursor 7-aminomethyl-7-deazaguanine (PreQ1) at position 34 (anticodon wobble position) in tRNAs with GU(N) anticodons (tRNA-Asp, -Asn, -His and -Tyr). Catalysis occurs through a double-displacement mechanism. The nucleophile active site attacks the C1' of nucleotide 34 to detach the guanine base from the RNA, forming a covalent enzyme-RNA intermediate. The proton acceptor active site deprotonates the incoming PreQ1, allowing a nucleophilic attack on the C1' of the ribose to form the product. After dissociation, two additional enzymatic reactions on the tRNA convert PreQ1 to queuine (Q), resulting in the hypermodified nucleoside queuosine (7-(((4,5-cis-dihydroxy-2-cyclopenten-1-yl)amino)methyl)-7-deazaguanosine). The protein is Queuine tRNA-ribosyltransferase of Vibrio cholerae serotype O1 (strain ATCC 39315 / El Tor Inaba N16961).